The sequence spans 147 residues: Male-specific protein scotti (147 aa).

Residues 55 to 93 (PQEPPLGVFPAQGGPNGPPRRRKKRSFYTMTKPTPPCQS) form a disordered region. A compositionally biased stretch (polar residues) spans 82–93 (YTMTKPTPPCQS). The N-linked (GlcNAc...) asparagine glycan is linked to asparagine 128.

Belongs to the male-specific scotti family. Expressed in primary spermatocytes and round spermatids. Low expression is seen in very short elongating cysts, but were detected at high levels in a few longer spermatid cysts.

Post-meiotically transcribed gene that has a role in late spermiogenesis; required for actin cone progression during spermatid individualization. In Drosophila melanogaster (Fruit fly), this protein is Male-specific protein scotti.